Consider the following 331-residue polypeptide: Type 2 lactosamine alpha-2,3-sialyltransferase (331 aa).

The Cytoplasmic segment spans residues 1-4 (MRGY). A helical; Signal-anchor for type II membrane protein membrane pass occupies residues 5 to 25 (LVAIFLSAVFLYYVLHCILWG). The Lumenal segment spans residues 26–331 (TNVYWVAPVE…KNLVINLTQD (306 aa)). N-linked (GlcNAc...) asparagine glycans are attached at residues Asn-129, Asn-181, Asn-282, Asn-295, Asn-308, and Asn-327.

It belongs to the glycosyltransferase 29 family.

The protein resides in the golgi apparatus membrane. The catalysed reaction is a neolactoside nLc4Cer(d18:1(4E)) + CMP-N-acetyl-beta-neuraminate = a neolactoside IV(3)-alpha-NeuAc-nLc4Cer(d18:1(4E)) + CMP + H(+). The enzyme catalyses a beta-D-galactosyl-(1-&gt;4)-N-acetyl-beta-D-glucosaminyl derivative + CMP-N-acetyl-beta-neuraminate = an N-acetyl-alpha-neuraminyl-(2-&gt;3)-beta-D-galactosyl-(1-&gt;4)-N-acetyl-beta-D-glucosaminyl derivative + CMP + H(+). It catalyses the reaction a neolactoside nLc6Cer(d18:1(4E)) + CMP-N-acetyl-beta-neuraminate = a neolactoside VI(3)-alpha-NeuNAc-nLc6Cer(d18:1(4E)) + CMP + H(+). Functionally, transfers the sialyl residue from CMP-N-acetyl-beta-neuraminate to the terminal galactose residue on sugar chains of glycoproteins and glycolipids. It's alpha-2,3-sialyltransferase activity is specific toward type II glycan chains (Galbeta1-4GlcNAc) on glycoproteins and glycolipids such as neolactosides nLc4Cer and nLc6Cer, whose sialyl-products serve as precursors for the Lewis X antigen. Critically involved in the synthesis of functional selectin ligands needed for neutrophil recruitment during inflammation and lymphocyte homing to the lymph nodes. The polypeptide is Type 2 lactosamine alpha-2,3-sialyltransferase (ST3GAL6) (Pan troglodytes (Chimpanzee)).